The sequence spans 98 residues: NADH-ubiquinone oxidoreductase chain 4L (98 aa).

The next 3 helical transmembrane spans lie at 1-21 (MSMV…GLLM), 29-49 (SLLC…MTIL), and 61-81 (IILL…LVMV).

Belongs to the complex I subunit 4L family. In terms of assembly, core subunit of respiratory chain NADH dehydrogenase (Complex I) which is composed of 45 different subunits.

Its subcellular location is the mitochondrion inner membrane. The enzyme catalyses a ubiquinone + NADH + 5 H(+)(in) = a ubiquinol + NAD(+) + 4 H(+)(out). Its function is as follows. Core subunit of the mitochondrial membrane respiratory chain NADH dehydrogenase (Complex I) which catalyzes electron transfer from NADH through the respiratory chain, using ubiquinone as an electron acceptor. Part of the enzyme membrane arm which is embedded in the lipid bilayer and involved in proton translocation. The sequence is that of NADH-ubiquinone oxidoreductase chain 4L (MT-ND4L) from Arctocephalus australis (South American fur seal).